The chain runs to 266 residues: Apolipoprotein A-I (266 aa).

Residues 1–18 (MKAVVLTLAVLFLTGSQA) form the signal peptide. Repeat copies occupy residues 67 to 88 (LKLL…EQIG) and 89 to 110 (PVTQ…QEMS). The tract at residues 67-266 (LKLLDNWDTL…DEATKKLNAQ (200 aa)) is 10 X approximate tandem repeats. Position 109 is a methionine sulfoxide (M109). Residues 111-121 (KDLEEVKQKVQ) form a 3; half-length repeat. 5 repeat units span residues 122-143 (PYLD…QKVA), 144-165 (PLGT…EKLS), 166-187 (PLGE…AQLA), 188-209 (PYSD…ESGG), and 210-231 (ASLA…EKAK). One copy of the 9; half-length repeat lies at 232 to 242 (PALEDLRQGLL). Residues 243–266 (PVLESFKVGLMAIVDEATKKLNAQ) form repeat 10.

Belongs to the apolipoprotein A1/A4/E family. As to quaternary structure, homodimer. Interacts with APOA1BP and CLU. Component of a sperm activating protein complex (SPAP), consisting of APOA1, an immunoglobulin heavy chain, an immunoglobulin light chain and albumin. Interacts with NDRG1. Interacts with SCGB3A2. Interacts with NAXE and YJEFN3. Glycosylated. Post-translationally, palmitoylated. In terms of processing, phosphorylation sites are present in the extracellular medium.

The protein resides in the secreted. Its function is as follows. Participates in the reverse transport of cholesterol from tissues to the liver for excretion by promoting cholesterol efflux from tissues and by acting as a cofactor for the lecithin cholesterol acyltransferase (LCAT). As part of the SPAP complex, activates spermatozoa motility. The polypeptide is Apolipoprotein A-I (APOA1) (Acinonyx jubatus (Cheetah)).